Consider the following 547-residue polypeptide: Methyl-accepting chemotaxis citrate transducer (547 aa).

Topologically, residues 1–5 (MKNIK) are cytoplasmic. The helical transmembrane segment at 6–29 (VITGVIATLGIFSALLLVTGILFY) threads the bilayer. Over 30 to 189 (SAVSSDRLNF…ASDQNQSSFT (160 aa)) the chain is Periplasmic. Residues 190-213 (QMQWTLGIILLIVLIVLAFIWLGL) traverse the membrane as a helical segment. Over 214–547 (QRVLLRPLQR…AAEQANWESF (334 aa)) the chain is Cytoplasmic. The HAMP domain occupies 215-267 (RVLLRPLQRIMAHIQTIADGDLTHEIEAEGRSEMGQLAAGLKTMQQSLIRTVS). The 230-residue stretch at 272-501 (NADSIYTGAG…ESAAAAAALE (230 aa)) folds into the Methyl-accepting transducer domain. Q296 carries the post-translational modification Glutamate methyl ester (Gln). E303 carries the glutamate methyl ester (Glu) modification. Q310 carries the glutamate methyl ester (Gln) modification. Residues 317 to 336 (QNTDNARQATGLAKTASETA) are disordered. A glutamate methyl ester (Glu) mark is found at E492 and E501. The tract at residues 518-547 (KQPRREASPTTLSKGLTPQPAAEQANWESF) is disordered.

The protein belongs to the methyl-accepting chemotaxis (MCP) protein family. In terms of processing, methylation level is increased by citrate and decreased by phenol.

It localises to the cell inner membrane. Acts as a receptor for citrate and mediates taxis away from phenol. Also mediates an attractant response to metal-citrate complexes. The sequence is that of Methyl-accepting chemotaxis citrate transducer (tcp) from Salmonella typhimurium (strain LT2 / SGSC1412 / ATCC 700720).